Consider the following 57-residue polypeptide: uncharacterized protein (57 aa).

The chain crosses the membrane as a helical span at residues 12–34 (VIAVLSLFVFAVAVFFVGMALLT).

The protein localises to the membrane. This is an uncharacterized protein from Pasteurella multocida (strain Pm70).